The primary structure comprises 285 residues: Protease HtpX homolog (285 aa).

2 consecutive transmembrane segments (helical) span residues 7–27 and 30–50; these read TAML…MIGG and GMTI…WFSD. Residue histidine 131 coordinates Zn(2+). The active site involves glutamate 132. Residue histidine 135 participates in Zn(2+) binding. A run of 2 helical transmembrane segments spans residues 146–166 and 177–197; these read ISAT…FFGG and IAGI…QMAI. Residue glutamate 202 participates in Zn(2+) binding.

Belongs to the peptidase M48B family. Requires Zn(2+) as cofactor.

The protein resides in the cell inner membrane. This is Protease HtpX homolog from Burkholderia mallei (strain NCTC 10247).